We begin with the raw amino-acid sequence, 150 residues long: UPF0179 protein Mbur_1033 (150 aa).

This sequence belongs to the UPF0179 family.

This Methanococcoides burtonii (strain DSM 6242 / NBRC 107633 / OCM 468 / ACE-M) protein is UPF0179 protein Mbur_1033.